The sequence spans 129 residues: Large ribosomal subunit protein bL12c (129 aa).

This sequence belongs to the bacterial ribosomal protein bL12 family. Homodimer. Part of the ribosomal stalk of the 50S ribosomal subunit. Forms a multimeric L10(L12)X complex, where L10 forms an elongated spine to which 2 to 4 L12 dimers bind in a sequential fashion. Binds GTP-bound translation factors.

It localises to the plastid. The protein localises to the chloroplast. Functionally, forms part of the ribosomal stalk which helps the ribosome interact with GTP-bound translation factors. Is thus essential for accurate translation. This Porphyra purpurea (Red seaweed) protein is Large ribosomal subunit protein bL12c.